We begin with the raw amino-acid sequence, 103 residues long: Large ribosomal subunit protein bL21 (103 aa).

This sequence belongs to the bacterial ribosomal protein bL21 family. As to quaternary structure, part of the 50S ribosomal subunit. Contacts protein L20.

Functionally, this protein binds to 23S rRNA in the presence of protein L20. The protein is Large ribosomal subunit protein bL21 of Glaesserella parasuis serovar 5 (strain SH0165) (Haemophilus parasuis).